Consider the following 380-residue polypeptide: Cytochrome b (380 aa).

Transmembrane regions (helical) follow at residues 33–53, 77–98, 113–133, and 178–198; these read FGSL…FLAM, WLIR…YLHV, WNIG…GYVL, and FFAF…IHLL. His-83 and His-97 together coordinate heme b. Heme b-binding residues include His-182 and His-196. An a ubiquinone-binding site is contributed by His-201. 4 consecutive transmembrane segments (helical) span residues 226–246, 288–308, 320–340, and 347–367; these read YKDL…ALFS, LGGV…PMLH, LSQI…WIGG, and FVLI…IALP.

It belongs to the cytochrome b family. The cytochrome bc1 complex contains 3 respiratory subunits (MT-CYB, CYC1 and UQCRFS1), 2 core proteins (UQCRC1 and UQCRC2) and probably 6 low-molecular weight proteins. Heme b is required as a cofactor.

It is found in the mitochondrion inner membrane. Component of the ubiquinol-cytochrome c reductase complex (complex III or cytochrome b-c1 complex) that is part of the mitochondrial respiratory chain. The b-c1 complex mediates electron transfer from ubiquinol to cytochrome c. Contributes to the generation of a proton gradient across the mitochondrial membrane that is then used for ATP synthesis. The protein is Cytochrome b (mt-cyb) of Acipenser transmontanus (White sturgeon).